We begin with the raw amino-acid sequence, 4367 residues long: Guanylate cyclase (4367 aa).

The segment covering 1–10 has biased composition (polar residues); that stretch reads MKKTRTTAAE. The disordered stretch occupies residues 1–70; that stretch reads MKKTRTTAAE…MSFLQGKHQQ (70 aa). Topologically, residues 1-150 are cytoplasmic; sequence MKKTRTTAAE…FKNLWEQFHR (150 aa). Over residues 19 to 33 the composition is skewed to basic and acidic residues; that stretch reads PHDEHRGRGREHGGA. Residues 54-63 show a composition bias toward polar residues; it reads HQATQKQMSF. A helical transmembrane segment spans residues 151-171; sequence VINWWFLVMAIIQAIPQLHYN. Residues 172–174 lie on the Extracellular side of the membrane; that stretch reads PNH. A helical transmembrane segment spans residues 175-195; the sequence is AWSTALPFAIVLVFGMLKDAF. The Cytoplasmic portion of the chain corresponds to 196-373; that stretch reads TDLGRRERDR…GFKRPHIEKD (178 aa). The chain crosses the membrane as a helical span at residues 374 to 394; that stretch reads INTYLFISFFIVFLTILISVM. Residues 395–452 are Extracellular-facing; that stretch reads SKWSVQERDSGDTGVTDAGASSGSGSSSGETSQTYGSSVEFMLGSRDLLQNPWMSILR. Positions 402-426 are disordered; sequence RDSGDTGVTDAGASSGSGSSSGETS. Residues 407 to 426 show a composition bias toward low complexity; that stretch reads TGVTDAGASSGSGSSSGETS. A helical membrane pass occupies residues 453 to 473; the sequence is FLAVYAPVLPLSLPLILDVVY. Residues 474-2258 lie on the Cytoplasmic side of the membrane; it reads LLQSVLIEGD…VHGRLSLMRV (1785 aa). Disordered regions lie at residues 486-535, 550-699, 831-918, 932-966, 980-1047, 1079-1164, 1344-1593, 1607-1652, 1773-1861, and 1881-1946; these read IRGG…QQPL, SEKF…ISGR, ETSA…ASSL, RLEETGSQKEEDSRSDRVSLSPSEGRVSGSRPQLA, VGIQ…GELS, GMSF…MPAV, PSGT…SLKS, FRRG…TGTG, GGRG…GLRS, and DKQH…PQHL. The span at 523–535 shows a compositional bias: polar residues; sequence AHSSQNASLQQPL. 2 stretches are compositionally biased toward basic and acidic residues: residues 605-628 and 670-679; these read ETLRADAEGAQERDREAEGNREQL and RRSDDRDRKS. Residues 850 to 863 are compositionally biased toward low complexity; that stretch reads SAASSRSQSAPASA. Residues 880-892 are compositionally biased toward polar residues; the sequence is QTLTNQQTGQQSP. Positions 906–917 are enriched in low complexity; it reads ASPGAADSPASS. The segment covering 932–948 has biased composition (basic and acidic residues); sequence RLEETGSQKEEDSRSDR. A compositionally biased stretch (low complexity) spans 983–996; the sequence is QSQHSSQSLLSSRQ. Basic and acidic residues predominate over residues 1025-1047; the sequence is DRMYSRDYHRESRSSSPRDGELS. Polar residues-rich tracts occupy residues 1084 to 1094 and 1117 to 1130; these read SRPSSQFTFSS and RSLTPPSERGTASP. A compositionally biased stretch (low complexity) spans 1344 to 1357; it reads PSGTSASSGAPSGP. 2 stretches are compositionally biased toward gly residues: residues 1370–1381 and 1389–1400; these read QGQGHGSLGAPG and CLGGAGGSGARG. Positions 1443-1454 are enriched in pro residues; sequence VPSPRPLSPAGP. Residues 1527–1542 show a composition bias toward basic and acidic residues; it reads SFKEKHEEFAFSKDED. Residues 1543–1567 are compositionally biased toward acidic residues; the sequence is TATVDQDDTQSATDEEHDVEGEEEE. The span at 1583–1593 shows a compositional bias: low complexity; it reads SASASLMSLKS. Composition is skewed to polar residues over residues 1628–1652, 1779–1791, and 1843–1852; these read GRSSSVERAQQPPTHGGFSTVTGTG, VSLSRLQSNSSAK, and VNPSGQTYSQ. Over residues 1881 to 1922 the composition is skewed to basic and acidic residues; sequence DKQHQRGHGPEGDEGSHELEGHDAHTGDSHGGHHRDQAEPRA. Residues 1933-1942 are compositionally biased toward polar residues; it reads RLPQKTQNRL. The chain crosses the membrane as a helical span at residues 2259 to 2279; it reads STVILWSFFKSLCIGLPTFLF. Over 2280 to 2289 the chain is Extracellular; that stretch reads QPQAFWSAVE. Residues 2290 to 2310 traverse the membrane as a helical segment; the sequence is VYDPLLLMIVDFFWTTLPGII. The Cytoplasmic portion of the chain corresponds to 2311-2343; the sequence is HGYSDQDLPTHLLPSVPVLYTPGRRRLYFNGFR. The helical transmembrane segment at 2344–2364 threads the bilayer; that stretch reads FILWTVEGIIYSFLIFYLLQA. Topologically, residues 2365–2376 are extracellular; sequence TWMDGNTFHDGQ. A helical membrane pass occupies residues 2377–2397; sequence VLGFHSYGILLLFGSLLQSNV. At 2398–2408 the chain is on the cytoplasmic side; it reads RIILETSLWTP. A helical transmembrane segment spans residues 2409–2429; that stretch reads TFLFTTIVLCTIMFFPTVLLY. The Extracellular portion of the chain corresponds to 2430–2444; sequence SVTGWPRRYMELAGR. A helical transmembrane segment spans residues 2445-2465; sequence VVFAWPMLYFLIPLWVSIGIL. Topologically, residues 2466-2724 are cytoplasmic; that stretch reads VQLLLQVFTS…LKRLVPWYRV (259 aa). A helical membrane pass occupies residues 2725–2745; that stretch reads IFMLIALYQLLSFLTEYFIDI. Residues 2746–2762 are Extracellular-facing; sequence HWNPGETEMEPWMCVPT. A helical transmembrane segment spans residues 2763–2783; sequence LVVEIGFAAVVVCTFYDFIFL. Over 2784–2785 the chain is Cytoplasmic; sequence DH. The chain crosses the membrane as a helical span at residues 2786-2806; sequence FSLILNSIVFLMVSSSIVFYT. The Extracellular segment spans residues 2807–2823; sequence ASHVDGTLTSVLFPVFT. A helical membrane pass occupies residues 2824 to 2844; that stretch reads FVILRISFLQAVVWNILFLIV. At 2845 to 2858 the chain is on the cytoplasmic side; it reads TVARFMLDKKYLPP. Residues 2859–2879 traverse the membrane as a helical segment; sequence LNFVHYIPLFIGIDVFVAFVG. Topologically, residues 2880–2903 are extracellular; the sequence is YRLEYNQRKSFLLDYSVDASRRKQ. Residues 2904 to 2924 form a helical membrane-spanning segment; that stretch reads REILNTMLPSFVVDQMINSEL. Residues 2925-3693 lie on the Cytoplasmic side of the membrane; that stretch reads NEEGIPTSLK…RTHFYNNKSN (769 aa). The Guanylate cyclase 1 domain maps to 2942–3150; the sequence is SVIFCDVYEF…DTVNTASRMK (209 aa). Disordered stretches follow at residues 3214–3245, 3359–3402, 3456–3475, 3485–3508, 3523–3596, and 3620–3653; these read DVISETGGQNGESRRSTASLPRQLETAGASSG, GQTE…SRFD, SGDEQAAGESSEADHDEVPL, QAREANEQESAKRSGGDAPPHTPT, GCAA…ETEK, and FRRRKPAAPSEAASPSSADTPMDSRVSPTSVDDE. Residues 3383–3402 show a composition bias toward basic and acidic residues; that stretch reads RADRRPAGRREDSRGDSRFD. 3 stretches are compositionally biased toward basic and acidic residues: residues 3485–3499, 3529–3541, and 3549–3569; these read QAREANEQESAKRSG, EEEKTAKEGRESE, and TESRDANGQRVSERDASDARE. Positions 3626–3637 are enriched in low complexity; sequence AAPSEAASPSSA. The helical transmembrane segment at 3694–3714 threads the bilayer; the sequence is INTIEQALIIFLVTFCVQTLT. The Extracellular segment spans residues 3715–3736; sequence RLALPRFYVVCSHHTINLHVCT. The helical transmembrane segment at 3737 to 3757 threads the bilayer; it reads GLYWAVRATYTLAAFVLWMLF. Residues 3758–3772 lie on the Cytoplasmic side of the membrane; it reads HYRNRKEVATCLELR. Residues 3773-3793 traverse the membrane as a helical segment; that stretch reads WMVFLLNLLFISASCVFALSN. The Extracellular portion of the chain corresponds to 3794 to 3895; the sequence is SWGVCGQQQE…GSDLVTANGR (102 aa). Residues 3896–3916 traverse the membrane as a helical segment; that stretch reads AYTYWLLSDTIELFFYIVILH. Topologically, residues 3917-3921 are cytoplasmic; it reads HNTGL. A helical membrane pass occupies residues 3922 to 3942; the sequence is LFQNCILVDVLLMTMSLTFII. Topologically, residues 3943–3950 are extracellular; it reads TTARETAS. A helical membrane pass occupies residues 3951–3971; that stretch reads TVSTIATFPCYVFFNLVSAYC. At 3972 to 4367 the chain is on the cytoplasmic side; the sequence is KEYIDRLTFY…GSTPGSALGS (396 aa). In terms of domain architecture, Guanylate cyclase 2 spans 4024–4159; sequence TFLFADICGF…MDVLTGNMME (136 aa). Mg(2+)-binding residues include Asp4029, Ile4030, and Asp4073. The segment at 4292-4367 is disordered; the sequence is ASHGDSGPSD…GSTPGSALGS (76 aa). A compositionally biased stretch (basic and acidic residues) spans 4333–4344; that stretch reads DGLKQLRKEIER. Over residues 4356 to 4367 the composition is skewed to polar residues; the sequence is DIGSTPGSALGS.

It in the N-terminal section; belongs to the cation transport ATPase (P-type) (TC 3.A.3) family. Type IV subfamily. The protein in the C-terminal section; belongs to the adenylyl cyclase class-4/guanylyl cyclase family. Interacts with chaperone CDC50.1; the interaction regulates guanylate cyclase GC trafficking and sensing environmental changes. Interacts with UGO; the interaction regulates guanylate cyclase GC trafficking and catalytic activity. Mg(2+) serves as cofactor. It depends on Mn(2+) as a cofactor.

It is found in the cell membrane. The catalysed reaction is GTP = 3',5'-cyclic GMP + diphosphate. Its function is as follows. Catalyzes the synthesis of the second messenger cGMP from GTP. During the tachyzoite lytic growth cycle in host cells, detects and transduces environmental changes in potassium, phosphatidic acid and pH levels. By producing cGMP in response to these environmental changes, activates PKG and thereby regulates PKG-dependent microneme secretion which is essential for tachyzoite motility, host cell attachment invasion of and egress from host cells. May play a role in the fission of connected tachyzoites at their basal pole during egress. Does not display flippase activity towards phosphatidylserine, phosphatidic acid or phosphatidylcholine. The polypeptide is Guanylate cyclase (Toxoplasma gondii (strain ATCC 50853 / GT1)).